We begin with the raw amino-acid sequence, 371 residues long: Peptide chain release factor 2 (371 aa).

Q253 is subject to N5-methylglutamine.

This sequence belongs to the prokaryotic/mitochondrial release factor family. Post-translationally, methylated by PrmC. Methylation increases the termination efficiency of RF2.

Its subcellular location is the cytoplasm. Peptide chain release factor 2 directs the termination of translation in response to the peptide chain termination codons UGA and UAA. The protein is Peptide chain release factor 2 (prfB) of Mycobacterium bovis (strain ATCC BAA-935 / AF2122/97).